The primary structure comprises 199 residues: Probable thymidylate kinase (199 aa).

9-16 contacts ATP; sequence GIDGCGKT.

The protein belongs to the thymidylate kinase family.

It catalyses the reaction dTMP + ATP = dTDP + ADP. In Methanococcus maripaludis (strain DSM 14266 / JCM 13030 / NBRC 101832 / S2 / LL), this protein is Probable thymidylate kinase.